We begin with the raw amino-acid sequence, 1087 residues long: Collagen alpha-2(I) chain (1087 aa).

Positions 1 to 931 (APDPGPGPMG…PGPAGGGYDV (931 aa)) are disordered. Composition is skewed to low complexity over residues 83–120 (EPGA…AAGP), 150–159 (EPGPNGAVGP), and 166–187 (PGNN…AGAP). The span at 189 to 199 (FPGPRGGPGPQ) shows a compositional bias: pro residues. Positions 201–211 (PQGAAGQRGLA) are enriched in low complexity. The span at 218–227 (GVKGDGGPKG) shows a compositional bias: gly residues. Composition is skewed to low complexity over residues 228–241 (EPGN…PGPQ), 278–321 (AAGP…AGPS), 335–345 (PRGQPGNLGFP), 360–384 (KGAT…TGAT), and 396–408 (QGAA…QGLP). The span at 409-418 (GPAGGAGEAG) shows a compositional bias: gly residues. Low complexity predominate over residues 443–453 (NPGAAGASGPQ). The segment covering 466 to 493 (GTDGGKGEPGAAGAAGGPGHQGPGGMPG) has biased composition (gly residues). Residues 504-515 (KGEKGEAGHRGP) are compositionally biased toward basic and acidic residues. Low complexity-rich tracts occupy residues 560 to 602 (PAGA…TGAR), 613 to 640 (FPGA…PAGK), and 677 to 695 (PGPA…LGLQ). Positions 708–717 (GSPGGAGAVG) are enriched in gly residues. Composition is skewed to low complexity over residues 718 to 740 (EPGR…LGLP) and 776 to 788 (PGSS…AGAP). Gly residues predominate over residues 792-812 (GPSGGAGRGNRGESGPGGAAG). A compositionally biased stretch (low complexity) spans 813 to 828 (AVGPAGARGAAGPSGP). Basic and acidic residues predominate over residues 829–843 (RGEKGVAGEKGERGL). 2 stretches are compositionally biased toward low complexity: residues 849 to 868 (LQGM…AGPN) and 897 to 909 (APGA…YVGP). A compositionally biased stretch (pro residues) spans 910–924 (AGPPGSPGLPGPPGP). The Fibrillar collagen NC1 domain maps to 929–1087 (YDVSGYDEYR…GLDLGPVCFK (159 aa)).

It belongs to the fibrillar collagen family.

It is found in the secreted. The protein localises to the extracellular space. It localises to the extracellular matrix. The polypeptide is Collagen alpha-2(I) chain (Epinephelus costae (Goldblotch grouper)).